A 601-amino-acid chain; its full sequence is MSGPRSGSGSGGSTGRPGDAESRRSAYEKEAHELTTQVAFLEEEVAMLRRRLSESPRQVRVLEERLAEVQAELSSATGQNDRLVATLREARDQIVTLKEEVDRLAQPPSGYGIFVSRYDDGTVDVFTQGRKLRVTVSPSVDVGSLSPGQEVMLNEALNVVEARSFERQGEIVLLKEVLESGDRALVIGHTDEERVVMLAQPLLDGPIRAGDSLLIEPRSGYAFERVPKSEVEELVLEEVPDIGYEQIGGLKSQIESIRDSVELPFLYKDLYREHQLKPPKGVLLYGPPGCGKTLIAKAVANSLAKKVEAITGQGNGRAFFLNIKGPELLNKFVGETERQIRLVFQRAREKASEGMPVIVFFDEMDSIFRTRGSGVSSDVENTIVPQLLSEIDGVEQLENVIVIGASNREDMIDPAILRPGRLDVKIKVERPDAEAARDIFAKYVVPSLPLYPEDLAEFDGNREATVAAMIQRVVERMYAESEENRFLEVTYANGDKEVLYFKDFNSGAMIENIVARAKKMAVKAHIEGGLKGLRMQYLLAACLDEFKENEDLPNTTNPDDWARISGKKGERIVYIRTLVTGTKGTEAGRSIDTIANTGQYL.

The segment covering 1–15 (MSGPRSGSGSGGSTG) has biased composition (gly residues). Residues 1-31 (MSGPRSGSGSGGSTGRPGDAESRRSAYEKEA) are disordered. Positions 18–31 (GDAESRRSAYEKEA) are enriched in basic and acidic residues. Residues 18–106 (GDAESRRSAY…LKEEVDRLAQ (89 aa)) are a coiled coil. 289-294 (GCGKTL) contributes to the ATP binding site. Residues 600-601 (YL) are docks into pockets in the proteasome alpha-ring.

It belongs to the AAA ATPase family. In terms of assembly, homohexamer. Assembles into a hexameric ring structure that caps the 20S proteasome core. Strongly interacts with the prokaryotic ubiquitin-like protein Pup through a hydrophobic interface; the interacting region of ARC lies in its N-terminal coiled-coil domain. There is one Pup binding site per ARC hexamer ring. Upon ATP-binding, the C-terminus of ARC interacts with the alpha-rings of the proteasome core, possibly by binding to the intersubunit pockets.

Its pathway is protein degradation; proteasomal Pup-dependent pathway. In terms of biological role, ATPase which is responsible for recognizing, binding, unfolding and translocation of pupylated proteins into the bacterial 20S proteasome core particle. May be essential for opening the gate of the 20S proteasome via an interaction with its C-terminus, thereby allowing substrate entry and access to the site of proteolysis. Thus, the C-termini of the proteasomal ATPase may function like a 'key in a lock' to induce gate opening and therefore regulate proteolysis. This Frankia alni (strain DSM 45986 / CECT 9034 / ACN14a) protein is Proteasome-associated ATPase.